The following is a 258-amino-acid chain: 3-deoxy-manno-octulosonate cytidylyltransferase (258 aa).

This sequence belongs to the KdsB family.

Its subcellular location is the cytoplasm. It catalyses the reaction 3-deoxy-alpha-D-manno-oct-2-ulosonate + CTP = CMP-3-deoxy-beta-D-manno-octulosonate + diphosphate. Its pathway is nucleotide-sugar biosynthesis; CMP-3-deoxy-D-manno-octulosonate biosynthesis; CMP-3-deoxy-D-manno-octulosonate from 3-deoxy-D-manno-octulosonate and CTP: step 1/1. It functions in the pathway bacterial outer membrane biogenesis; lipopolysaccharide biosynthesis. In terms of biological role, activates KDO (a required 8-carbon sugar) for incorporation into bacterial lipopolysaccharide in Gram-negative bacteria. This chain is 3-deoxy-manno-octulosonate cytidylyltransferase, found in Blochmanniella floridana.